The chain runs to 122 residues: Ribosome-binding factor A (122 aa).

The protein belongs to the RbfA family. In terms of assembly, monomer. Binds 30S ribosomal subunits, but not 50S ribosomal subunits or 70S ribosomes.

The protein resides in the cytoplasm. Its function is as follows. One of several proteins that assist in the late maturation steps of the functional core of the 30S ribosomal subunit. Associates with free 30S ribosomal subunits (but not with 30S subunits that are part of 70S ribosomes or polysomes). Required for efficient processing of 16S rRNA. May interact with the 5'-terminal helix region of 16S rRNA. The polypeptide is Ribosome-binding factor A (Geotalea uraniireducens (strain Rf4) (Geobacter uraniireducens)).